Reading from the N-terminus, the 97-residue chain is RNA-binding protein YhbY (97 aa).

Residues 1 to 97 (MNLSTKQKQH…TKERKISLPR (97 aa)) enclose the CRM domain.

In Escherichia coli O157:H7, this protein is RNA-binding protein YhbY (yhbY).